A 173-amino-acid chain; its full sequence is NADH-ubiquinone oxidoreductase chain 6 (173 aa).

The next 5 membrane-spanning stretches (helical) occupy residues Met1–Ser21, Ala28–Gly48, Leu53–Leu73, Val87–Val107, and Leu139–Leu159.

Belongs to the complex I subunit 6 family.

The protein resides in the mitochondrion membrane. It catalyses the reaction a ubiquinone + NADH + 5 H(+)(in) = a ubiquinol + NAD(+) + 4 H(+)(out). Its function is as follows. Core subunit of the mitochondrial membrane respiratory chain NADH dehydrogenase (Complex I) that is believed to belong to the minimal assembly required for catalysis. Complex I functions in the transfer of electrons from NADH to the respiratory chain. The immediate electron acceptor for the enzyme is believed to be ubiquinone. This is NADH-ubiquinone oxidoreductase chain 6 (MT-ND6) from Scyliorhinus canicula (Small-spotted catshark).